The sequence spans 485 residues: UDP-N-acetylmuramate--L-alanine ligase (485 aa).

120-126 contributes to the ATP binding site; sequence GSHGKTT.

It belongs to the MurCDEF family.

The protein localises to the cytoplasm. It carries out the reaction UDP-N-acetyl-alpha-D-muramate + L-alanine + ATP = UDP-N-acetyl-alpha-D-muramoyl-L-alanine + ADP + phosphate + H(+). Its pathway is cell wall biogenesis; peptidoglycan biosynthesis. Cell wall formation. This is UDP-N-acetylmuramate--L-alanine ligase from Rickettsia peacockii (strain Rustic).